Consider the following 156-residue polypeptide: Ribosomal RNA large subunit methyltransferase H (156 aa).

Residues Leu73, Gly104, and 123–128 (ISSMTL) contribute to the S-adenosyl-L-methionine site.

The protein belongs to the RNA methyltransferase RlmH family. Homodimer.

The protein resides in the cytoplasm. The catalysed reaction is pseudouridine(1915) in 23S rRNA + S-adenosyl-L-methionine = N(3)-methylpseudouridine(1915) in 23S rRNA + S-adenosyl-L-homocysteine + H(+). In terms of biological role, specifically methylates the pseudouridine at position 1915 (m3Psi1915) in 23S rRNA. The sequence is that of Ribosomal RNA large subunit methyltransferase H from Burkholderia vietnamiensis (strain G4 / LMG 22486) (Burkholderia cepacia (strain R1808)).